The following is a 488-amino-acid chain: Inosine-5'-monophosphate dehydrogenase (488 aa).

2 consecutive CBS domains span residues 95–153 and 157–213; these read VITN…SIKI and MTKE…PHAA. Residues aspartate 250 and 300–302 contribute to the NAD(+) site; that span reads GIG. The K(+) site is built by glycine 302 and glycine 304. Serine 305 is a binding site for IMP. Cysteine 307 is a binding site for K(+). Cysteine 307 (thioimidate intermediate) is an active-site residue. Residues 340–342, 363–364, and 387–391 contribute to the IMP site; these read DGG, GS, and YRGMG. Arginine 403 acts as the Proton acceptor in catalysis. Glutamate 417 is a binding site for IMP. The tract at residues 467–488 is disordered; the sequence is AGLAESHPHNVQITKESPNYSF. Residues glutamate 471, serine 472, and histidine 473 each contribute to the K(+) site. Residues 475–488 show a composition bias toward polar residues; sequence HNVQITKESPNYSF.

The protein belongs to the IMPDH/GMPR family. In terms of assembly, homotetramer. Requires K(+) as cofactor.

It catalyses the reaction IMP + NAD(+) + H2O = XMP + NADH + H(+). The protein operates within purine metabolism; XMP biosynthesis via de novo pathway; XMP from IMP: step 1/1. Its activity is regulated as follows. Mycophenolic acid (MPA) is a non-competitive inhibitor that prevents formation of the closed enzyme conformation by binding to the same site as the amobile flap. In contrast, mizoribine monophosphate (MZP) is a competitive inhibitor that induces the closed conformation. MPA is a potent inhibitor of mammalian IMPDHs but a poor inhibitor of the bacterial enzymes. MZP is a more potent inhibitor of bacterial IMPDH. In terms of biological role, catalyzes the conversion of inosine 5'-phosphate (IMP) to xanthosine 5'-phosphate (XMP), the first committed and rate-limiting step in the de novo synthesis of guanine nucleotides, and therefore plays an important role in the regulation of cell growth. This chain is Inosine-5'-monophosphate dehydrogenase, found in Staphylococcus haemolyticus (strain JCSC1435).